The primary structure comprises 408 residues: 2,3-bisphosphoglycerate-independent phosphoglycerate mutase 1 (408 aa).

This sequence belongs to the BPG-independent phosphoglycerate mutase family. A-PGAM subfamily. As to quaternary structure, monomer. Requires Mn(2+) as cofactor.

The catalysed reaction is (2R)-2-phosphoglycerate = (2R)-3-phosphoglycerate. It participates in carbohydrate degradation; glycolysis; pyruvate from D-glyceraldehyde 3-phosphate: step 3/5. Its function is as follows. Catalyzes the interconversion of 2-phosphoglycerate and 3-phosphoglycerate. The sequence is that of 2,3-bisphosphoglycerate-independent phosphoglycerate mutase 1 (apgM1) from Archaeoglobus fulgidus (strain ATCC 49558 / DSM 4304 / JCM 9628 / NBRC 100126 / VC-16).